A 324-amino-acid chain; its full sequence is Transcriptional regulator protein Pur-beta (324 aa).

The interval 1–47 (MADGDSGSERGGGGGGGGGPGGFQPAPRGGGGGGGGPGGEQETQELA) is disordered. An N-acetylalanine modification is found at Ala2. A phosphoserine mark is found at Ser6 and Ser8. Residues 9–39 (ERGGGGGGGGGPGGFQPAPRGGGGGGGGPGG) are compositionally biased toward gly residues. Omega-N-methylarginine is present on Arg28. Positions 37–263 (PGGEQETQEL…GVFLRVSEVK (227 aa)) are DNA-binding. Thr43 bears the Phosphothreonine mark. Phosphoserine is present on Ser113. Position 164 is an omega-N-methylarginine (Arg164). At Lys279 the chain carries N6-acetyllysine. Positions 297 to 307 (RQRDKLYERRG) are enriched in basic and acidic residues. The disordered stretch occupies residues 297 to 324 (RQRDKLYERRGGGSGGGDESEGEEVDED). Omega-N-methylarginine is present on Arg306. Ser310 and Ser316 each carry phosphoserine. Positions 314–324 (DESEGEEVDED) are enriched in acidic residues.

The protein belongs to the PUR DNA-binding protein family. As to quaternary structure, homodimer, heterodimer with PURA and heterotrimer with PURA and YBX1/Y-box protein 1. Interacts with MYOCD and SRF.

Its subcellular location is the nucleus. Its function is as follows. Transcriptional regulator which can act as an activator or a repressor. Represses the transcription of ACTA2 in fibroblasts and smooth muscle cells via its ability to interact with the purine-rich strand of a MCAT-containing element in the 5' flanking region of the gene. Represses the transcription of MYOCD, capable of repressing all isoforms of MYOCD but the magnitude of the repressive effects is most notable for the SMC-specific isoforms. Promotes hepatic glucose production by activating the transcription of ADCY6, leading to cAMP accumulation, increased PKA activity, CREB activation, and increased transcription of PCK1 and G6PC genes. Has capacity to bind repeated elements in single-stranded DNA such as the purine-rich single strand of the PUR element located upstream of the MYC gene. Participates in transcriptional and translational regulation of alpha-MHC expression in cardiac myocytes by binding to the purine-rich negative regulatory (PNR) element. Modulates constitutive liver galectin-3 gene transcription by binding to its promoter. May play a role in the dendritic transport of a subset of mRNAs. This is Transcriptional regulator protein Pur-beta (Purb) from Mus musculus (Mouse).